Here is a 334-residue protein sequence, read N- to C-terminus: Glutaminase (334 aa).

Substrate-binding residues include serine 76, asparagine 126, glutamate 170, asparagine 177, tyrosine 201, tyrosine 253, and valine 271.

Belongs to the glutaminase family. Homotetramer.

The catalysed reaction is L-glutamine + H2O = L-glutamate + NH4(+). The protein is Glutaminase of Nostoc sp. (strain PCC 7120 / SAG 25.82 / UTEX 2576).